A 354-amino-acid polypeptide reads, in one-letter code: F-box/kelch-repeat protein At1g80440 (354 aa).

The F-box domain occupies 2 to 49; sequence ELIPNLPDDVARECLLRSSYQQFPVIASVCRAWNREVSLSQFLHQRKA. Kelch repeat units follow at residues 63-110, 115-163, 166-213, and 215-263; these read RVDP…CRLV, DLIV…ASDS, TVLV…FHAG, and FHVI…PPTC.

The polypeptide is F-box/kelch-repeat protein At1g80440 (Arabidopsis thaliana (Mouse-ear cress)).